A 319-amino-acid chain; its full sequence is Homoserine O-acetyltransferase (319 aa).

The active-site Acyl-thioester intermediate is the Cys-142. Positions 163 and 192 each coordinate substrate. His-235 serves as the catalytic Proton acceptor. Residue Glu-237 is part of the active site. Substrate is bound at residue Arg-249.

It belongs to the MetA family.

The protein localises to the cytoplasm. It carries out the reaction L-homoserine + acetyl-CoA = O-acetyl-L-homoserine + CoA. It functions in the pathway amino-acid biosynthesis; L-methionine biosynthesis via de novo pathway; O-acetyl-L-homoserine from L-homoserine: step 1/1. Functionally, transfers an acetyl group from acetyl-CoA to L-homoserine, forming acetyl-L-homoserine. In Lactococcus lactis subsp. cremoris (strain MG1363), this protein is Homoserine O-acetyltransferase.